Consider the following 1069-residue polypeptide: Kinesin-like protein vab-8 (1069 aa).

One can recognise a Kinesin motor domain in the interval 15–325; sequence PLRTIPKLRL…ACKIARTRVK (311 aa). Disordered stretches follow at residues 328–374, 391–436, and 572–598; these read MGHG…LESG, SRTT…KSSP, and EQEEESMRTSTATTGGSKKDHPLRILS. Interaction with unc-51 stretches follow at residues 331–517 and 517–719; these read GRKP…KSKY and YNLD…TVVD. Low complexity-rich tracts occupy residues 339-364 and 391-407; these read SSGTMDSNGSSSSFGTTTITPGGTPR and SRTTSPASTTMPSTPTS. The interaction with unc-73 stretch occupies residues 403 to 877; it reads STPTSIRPLH…SAERDRKTSK (475 aa). A coiled-coil region spans residues 719-769; the sequence is DWSQIERKKEREKDAMEEEKRKEVLRERRAKLKITELEIKRERNMIDKELD. The interval 786 to 960 is disordered; it reads SLSPCRGGRT…RQSYSASSGY (175 aa). The span at 824–847 shows a compositional bias: low complexity; the sequence is GGSLAKLSASGASGSGPPSSPSLG. Positions 883-897 are enriched in basic and acidic residues; the sequence is SSKERRSSGSKEELQ. A compositionally biased stretch (low complexity) spans 906 to 928; the sequence is TSPKTYGGPGTSSSGRGSSAPGS. Residues 938–960 show a composition bias toward polar residues; that stretch reads TEKTANGTMPRSKRQSYSASSGY. The stretch at 990-1027 forms a coiled coil; that stretch reads LVRQADEIRHRQWQLKKELEEAKRAIGQEEDAKMIANS.

The protein belongs to the TRAFAC class myosin-kinesin ATPase superfamily. Kinesin family. KIF26 subfamily. As to quaternary structure, interacts with unc-51 and unc-73. In terms of processing, phosphorylated by unc-51.

Its subcellular location is the cytoplasm. It localises to the cytoskeleton. In terms of biological role, required for posterior migration of cells and axon growth cones during nervous system assembly. In PLM neuron, regulates innexin unc-9 gap junction turnover by suppressing unc-9 transport out of the gap junctions. This Caenorhabditis briggsae protein is Kinesin-like protein vab-8 (vab-8).